The sequence spans 365 residues: GTPase Obg (365 aa).

Residues 1–159 enclose the Obg domain; that stretch reads MKFIDEARIE…RMLKLELKVL (159 aa). In terms of domain architecture, OBG-type G spans 160 to 334; it reads ADVGLLGMPN…LIYAIKDHLQ (175 aa). GTP is bound by residues 166–173, 191–195, 213–216, 284–287, and 315–317; these read GMPNAGKS, FTTLH, DIPG, NKLD, and SAL. Mg(2+) contacts are provided by Ser173 and Thr193.

The protein belongs to the TRAFAC class OBG-HflX-like GTPase superfamily. OBG GTPase family. In terms of assembly, monomer. It depends on Mg(2+) as a cofactor.

Its subcellular location is the cytoplasm. In terms of biological role, an essential GTPase which binds GTP, GDP and possibly (p)ppGpp with moderate affinity, with high nucleotide exchange rates and a fairly low GTP hydrolysis rate. Plays a role in control of the cell cycle, stress response, ribosome biogenesis and in those bacteria that undergo differentiation, in morphogenesis control. The polypeptide is GTPase Obg (Cupriavidus taiwanensis (strain DSM 17343 / BCRC 17206 / CCUG 44338 / CIP 107171 / LMG 19424 / R1) (Ralstonia taiwanensis (strain LMG 19424))).